Here is a 392-residue protein sequence, read N- to C-terminus: V-type proton ATPase subunit C (392 aa).

At alanine 2 the chain carries N-acetylalanine.

The protein belongs to the V-ATPase C subunit family. As to quaternary structure, V-ATPase is a heteromultimeric enzyme composed of a peripheral catalytic V1 complex (components A to H) attached to an integral membrane V0 proton pore complex (components: a, c, c', c'', d, e, f and VOA1). Interacts directly with VMA4.

It is found in the vacuole membrane. Its function is as follows. Subunit of the V1 complex of vacuolar(H+)-ATPase (V-ATPase), a multisubunit enzyme composed of a peripheral complex (V1) that hydrolyzes ATP and a membrane integral complex (V0) that translocates protons. V-ATPase is responsible for acidifying and maintaining the pH of intracellular compartments. Subunit C is necessary for the assembly of the catalytic sector of the enzyme and is likely to have a specific function in its catalytic activity. Reversibly leaves the enzyme after glucose depletion, causing the catalytic subcomplex V1 to detach from the V0 section. The polypeptide is V-type proton ATPase subunit C (Saccharomyces cerevisiae (strain ATCC 204508 / S288c) (Baker's yeast)).